Consider the following 218-residue polypeptide: Probable GTP-binding protein EngB (218 aa).

In terms of domain architecture, EngB-type G spans D44 to T218. Residues G52 to S59, G79 to E83, D97 to G100, T164 to D167, and T198 to S200 each bind GTP. 2 residues coordinate Mg(2+): S59 and T81.

Belongs to the TRAFAC class TrmE-Era-EngA-EngB-Septin-like GTPase superfamily. EngB GTPase family. It depends on Mg(2+) as a cofactor.

Its function is as follows. Necessary for normal cell division and for the maintenance of normal septation. This Jannaschia sp. (strain CCS1) protein is Probable GTP-binding protein EngB.